The chain runs to 594 residues: Arginine--tRNA ligase (594 aa).

The short motif at 139–149 is the 'HIGH' region element; that stretch reads ANPTGPLHVGH.

It belongs to the class-I aminoacyl-tRNA synthetase family. Monomer.

It is found in the cytoplasm. It carries out the reaction tRNA(Arg) + L-arginine + ATP = L-arginyl-tRNA(Arg) + AMP + diphosphate. The polypeptide is Arginine--tRNA ligase (Paraburkholderia phymatum (strain DSM 17167 / CIP 108236 / LMG 21445 / STM815) (Burkholderia phymatum)).